The sequence spans 292 residues: Diaminopimelate epimerase (292 aa).

Residues Asn-14 and Asn-78 each contribute to the substrate site. Cys-87 (proton donor) is an active-site residue. Substrate is bound by residues 88-89 (GN), Asn-164, Asn-197, and 221-222 (ER). The active-site Proton acceptor is Cys-230. 231 to 232 (GT) provides a ligand contact to substrate.

This sequence belongs to the diaminopimelate epimerase family. In terms of assembly, homodimer.

It is found in the cytoplasm. It carries out the reaction (2S,6S)-2,6-diaminopimelate = meso-2,6-diaminopimelate. Its pathway is amino-acid biosynthesis; L-lysine biosynthesis via DAP pathway; DL-2,6-diaminopimelate from LL-2,6-diaminopimelate: step 1/1. Its function is as follows. Catalyzes the stereoinversion of LL-2,6-diaminopimelate (L,L-DAP) to meso-diaminopimelate (meso-DAP), a precursor of L-lysine and an essential component of the bacterial peptidoglycan. In Leifsonia xyli subsp. xyli (strain CTCB07), this protein is Diaminopimelate epimerase.